Here is a 54-residue protein sequence, read N- to C-terminus: MAVPKKRTSKAKKNSRKANWKRKAAKSAQKSLSLAKSILRGKTTSFVYRLYVDE.

The segment covering 1-25 (MAVPKKRTSKAKKNSRKANWKRKAA) has biased composition (basic residues). The interval 1 to 26 (MAVPKKRTSKAKKNSRKANWKRKAAK) is disordered.

Belongs to the bacterial ribosomal protein bL32 family.

The protein resides in the plastid. Its subcellular location is the chloroplast. This chain is Large ribosomal subunit protein bL32c, found in Thalassiosira pseudonana (Marine diatom).